The chain runs to 185 residues: Translation initiation factor IF-3 (185 aa).

It belongs to the IF-3 family. Monomer.

The protein resides in the cytoplasm. IF-3 binds to the 30S ribosomal subunit and shifts the equilibrium between 70S ribosomes and their 50S and 30S subunits in favor of the free subunits, thus enhancing the availability of 30S subunits on which protein synthesis initiation begins. This chain is Translation initiation factor IF-3, found in Bacteroides thetaiotaomicron (strain ATCC 29148 / DSM 2079 / JCM 5827 / CCUG 10774 / NCTC 10582 / VPI-5482 / E50).